The primary structure comprises 63 residues: Large ribosomal subunit protein uL29 (63 aa).

The protein belongs to the universal ribosomal protein uL29 family.

This chain is Large ribosomal subunit protein uL29, found in Alteromonas mediterranea (strain DSM 17117 / CIP 110805 / LMG 28347 / Deep ecotype).